The following is a 470-amino-acid chain: Trigger factor (470 aa).

Positions 164-243 (GDYVVIDMTA…VTAVKVQELP (80 aa)) constitute a PPIase FKBP-type domain. Acidic residues-rich tracts occupy residues 424–438 (ETDAEDAAEGVESVE) and 445–470 (AEDDAEETSDEPAAEDTATEDEAAKA). The disordered stretch occupies residues 424-470 (ETDAEDAAEGVESVEVDLSAAAEDDAEETSDEPAAEDTATEDEAAKA).

The protein belongs to the FKBP-type PPIase family. Tig subfamily.

The protein resides in the cytoplasm. The enzyme catalyses [protein]-peptidylproline (omega=180) = [protein]-peptidylproline (omega=0). Involved in protein export. Acts as a chaperone by maintaining the newly synthesized protein in an open conformation. Functions as a peptidyl-prolyl cis-trans isomerase. The chain is Trigger factor from Beutenbergia cavernae (strain ATCC BAA-8 / DSM 12333 / CCUG 43141 / JCM 11478 / NBRC 16432 / NCIMB 13614 / HKI 0122).